The chain runs to 896 residues: Rho GTPase-activating protein gacM (896 aa).

Residues 1–97 are disordered; that stretch reads MSSFIGWKKN…SSNDTIGKSS (97 aa). The span at 10–26 shows a compositional bias: low complexity; that stretch reads NSNSGGTPGASPTSSSP. The span at 27 to 38 shows a compositional bias: polar residues; that stretch reads LNSTISNANSVS. Composition is skewed to low complexity over residues 45-57 and 65-97; these read SISN…LSSS and NSNN…GKSS. Residues 139–330 form the Rho-GAP domain; sequence QPINPNTEFG…LWIEEFDMIS (192 aa). Composition is skewed to low complexity over residues 375 to 391, 400 to 427, 448 to 460, and 473 to 506; these read IQQQ…QSHP, SSLS…LLPT, PTPT…TPQT, and NNNS…NNNN. Disordered regions lie at residues 375-514 and 701-770; these read IQQQ…GSPL and LPTG…ENQI. Polar residues predominate over residues 702-711; that stretch reads PTGSSWSDFE. 2 stretches are compositionally biased toward low complexity: residues 712-743 and 751-761; these read NNSS…NSSP and SNGLNSSSNSN.

The protein localises to the cytoplasm. Its function is as follows. Rho GTPase-activating protein involved in the signal transduction pathway. The sequence is that of Rho GTPase-activating protein gacM (gacM) from Dictyostelium discoideum (Social amoeba).